Consider the following 845-residue polypeptide: Proto-oncogene vav (845 aa).

Residues 1–119 (MELWRQCTHW…YTLSALSWTP (119 aa)) form the Calponin-homology (CH) domain. In terms of domain architecture, DH spans 194 to 373 (KRCCCLREIQ…RDLAQCVNEV (180 aa)). Positions 402-504 (RPKIDGELKI…WMEQFEMAIS (103 aa)) constitute a PH domain. The Phorbol-ester/DAG-type zinc-finger motif lies at 515 to 564 (GHDFQMFSFEETTSCKACQMLLRGTFYQGYRCYRCRAPAHKECLGRVPPC). An SH3 1 domain is found at 592 to 660 (LGLPKMEVFQ…PCNRVHPYVH (69 aa)). One can recognise an SH2 domain in the interval 671–765 (WYAGPMERAG…SLDTTLQFPY (95 aa)). Residues 782–842 (KYFGTAKARY…PSNYVEEDYS (61 aa)) enclose the SH3 2 domain. A phosphotyrosine mark is found at tyrosine 826 and tyrosine 844.

In terms of assembly, interacts with SHB. Interacts with APS, DOCK2, GRB2, GRB3, DOCK2, SLA, TEC and ZNF655/VIK. Interacts with SIAH2; without leading to its degradation. Associates with BLNK, PLCG1, GRB2 and NCK1 in a B-cell antigen receptor-dependent fashion. Interacts with CBLB; which inhibits tyrosine phosphorylation and down-regulates activity. May interact with CCPG1. Interacts with CLNK. Interacts with THEMIS2. Interacts with NEK3 and this interaction is prolactin-dependent. Interacts with ITK. Interacts with PTK2B/PYK2. Interacts with HCK. Interacts with PTK2B/PYK2. Interacts (via SH2 domain) with SYK. Interacts with ANKRD54. Interacts with CD6. Interacts with isoform 2 of CRACR2A. Interacts with LCP2; this interaction plays a role in TCR-mediated cytokine production. Post-translationally, phosphorylated by FYN. Phosphorylated on tyrosine residues by HCK in response to IFNG and bacterial lipopolysaccharide (LPS). As to expression, widely expressed in hematopoietic cells but not in other cell types. Found in the spleen and lung.

Couples tyrosine kinase signals with the activation of the Rho/Rac GTPases, thus leading to cell differentiation and/or proliferation. The protein is Proto-oncogene vav (Vav1) of Mus musculus (Mouse).